Consider the following 65-residue polypeptide: Large ribosomal subunit protein bL33c (65 aa).

It belongs to the bacterial ribosomal protein bL33 family.

Its subcellular location is the plastid. It is found in the chloroplast. The sequence is that of Large ribosomal subunit protein bL33c from Chara vulgaris (Common stonewort).